Here is a 603-residue protein sequence, read N- to C-terminus: NAD 5'-nucleotidase (603 aa).

Residues 1–25 (MLLSKKSASFALSAFAMLFTSVALA) form the signal peptide. Zn(2+) contacts are provided by Asp44, His46, Asp94, Asn126, and His227. Substrate contacts are provided by residues Arg397, Arg437, Phe456, and 540–546 (YVAGGKD).

It belongs to the 5'-nucleotidase family. Zn(2+) is required as a cofactor.

The protein localises to the periplasm. It carries out the reaction a ribonucleoside 5'-phosphate + H2O = a ribonucleoside + phosphate. Degrades NAD into adenosine and nicotinamide riboside, the latter being subsequently internalized by a specific permease. Also endowed with NAD(P) pyrophosphatase activity. Exhibits a broad substrate specificity, recognizing either mono- or dinucleotide nicotinamides and different adenosine phosphates with a maximal activity on 5'-adenosine monophosphate. The protein is NAD 5'-nucleotidase of Haemophilus influenzae (strain ATCC 51907 / DSM 11121 / KW20 / Rd).